Here is a 370-residue protein sequence, read N- to C-terminus: N-acetyldiaminopimelate deacetylase (370 aa).

Asp-67 is an active-site residue. The active-site Proton acceptor is the Glu-126.

It belongs to the peptidase M20A family. N-acetyldiaminopimelate deacetylase subfamily.

The enzyme catalyses N-acetyl-(2S,6S)-2,6-diaminopimelate + H2O = (2S,6S)-2,6-diaminopimelate + acetate. The protein operates within amino-acid biosynthesis; L-lysine biosynthesis via DAP pathway; LL-2,6-diaminopimelate from (S)-tetrahydrodipicolinate (acetylase route): step 3/3. Functionally, catalyzes the conversion of N-acetyl-diaminopimelate to diaminopimelate and acetate. This is N-acetyldiaminopimelate deacetylase from Exiguobacterium sibiricum (strain DSM 17290 / CCUG 55495 / CIP 109462 / JCM 13490 / 255-15).